The chain runs to 273 residues: 3-methyl-2-oxobutanoate hydroxymethyltransferase (273 aa).

Asp-53 and Asp-92 together coordinate Mg(2+). 3-methyl-2-oxobutanoate contacts are provided by residues 53 to 54 (DS), Asp-92, and Lys-122. A Mg(2+)-binding site is contributed by Glu-124. Catalysis depends on Glu-191, which acts as the Proton acceptor.

This sequence belongs to the PanB family. Homodecamer; pentamer of dimers. Mg(2+) is required as a cofactor.

It is found in the cytoplasm. It carries out the reaction 3-methyl-2-oxobutanoate + (6R)-5,10-methylene-5,6,7,8-tetrahydrofolate + H2O = 2-dehydropantoate + (6S)-5,6,7,8-tetrahydrofolate. It participates in cofactor biosynthesis; (R)-pantothenate biosynthesis; (R)-pantoate from 3-methyl-2-oxobutanoate: step 1/2. Its function is as follows. Catalyzes the reversible reaction in which hydroxymethyl group from 5,10-methylenetetrahydrofolate is transferred onto alpha-ketoisovalerate to form ketopantoate. In Parabacteroides distasonis (strain ATCC 8503 / DSM 20701 / CIP 104284 / JCM 5825 / NCTC 11152), this protein is 3-methyl-2-oxobutanoate hydroxymethyltransferase.